The chain runs to 564 residues: Pachytene checkpoint protein 2 (564 aa).

G314–T321 is a binding site for ATP.

Belongs to the AAA ATPase family. PCH2 subfamily.

The protein localises to the nucleus. It is found in the nucleolus. The protein resides in the chromosome. In terms of biological role, required for the pachytene checkpoint, the meiotic checkpoint that prevents chromosome segregation when defects in recombination and synaptonemal complex formation occurred. Represses meiotic recombination in the rDNA, probably by excluding the meiosis-specific protein HOP1 from the nucleolar region. The polypeptide is Pachytene checkpoint protein 2 (PCH2) (Saccharomyces cerevisiae (strain ATCC 204508 / S288c) (Baker's yeast)).